The following is a 513-amino-acid chain: Probable G-protein coupled receptor 176 (513 aa).

Residues 1–25 are disordered; sequence MGHNGSWVSPNTSHPRNTSGAQAGA. At 1-41 the chain is on the extracellular side; that stretch reads MGHNGSWVSPNTSHPRNTSGAQAGANSSAFGELSEAQLYRQ. N-linked (GlcNAc...) asparagine glycans are attached at residues asparagine 4, asparagine 11, asparagine 17, and asparagine 26. A helical transmembrane segment spans residues 42–64; the sequence is FTTTVQVVIFIGSLLGNFTVLWS. Over 65 to 77 the chain is Cytoplasmic; sequence TCRTTVFKSVTNR. A helical membrane pass occupies residues 78-98; the sequence is FIKNLACSGICASVVCVPFDI. The Extracellular segment spans residues 99 to 108; it reads ILSTSPHCCW. The helical transmembrane segment at 109 to 129 threads the bilayer; sequence WIYTMLFCKVLKFLHKVFCSV. The Cytoplasmic portion of the chain corresponds to 130-157; the sequence is TVLSFPAIALDRYYSVLYPLERKISDAK. A helical transmembrane segment spans residues 158-177; that stretch reads SRELVMYIWAHAVVASVPVF. Residues 178–204 lie on the Extracellular side of the membrane; it reads AVTNVADIYATSTCTEVWSNSLGHLVY. A helical transmembrane segment spans residues 205–225; that stretch reads VLIYNVTTVIVPVAVVFLFLI. Over 226–264 the chain is Cytoplasmic; the sequence is LIRRALSASQKKKVIIAALRTPQNTISIPYASQREAELH. A helical membrane pass occupies residues 265–285; sequence ATLLSMVTVFILCSVPYATLV. Topologically, residues 286–301 are extracellular; it reads VYQTVLNVPNTSVFLL. Residues 302-322 traverse the membrane as a helical segment; that stretch reads LTAIWLPKVSLLANPVLFLTV. At 323 to 513 the chain is on the cytoplasmic side; the sequence is NRSVRKCLVG…KVSIFPKVDS (191 aa). The segment at 404–432 is disordered; sequence VLTSSPEGEESQLAPSVPPPGTVDSVSRV.

Belongs to the G-protein coupled receptor 1 family. In terms of tissue distribution, expressed in brain, lung, heart, stomach, intestine, cultured aortic smooth muscle cells and cardiac myocytes.

The protein resides in the cell membrane. Orphan receptor involved in normal circadian rhythm behavior. Acts through the G-protein subclass G(z)-alpha and has an agonist-independent basal activity to repress cAMP production. The sequence is that of Probable G-protein coupled receptor 176 (Gpr176) from Rattus norvegicus (Rat).